Reading from the N-terminus, the 67-residue chain is Large ribosomal subunit protein bL32 (67 aa).

Basic residues predominate over residues 1 to 19 (MAVPKRKQSRANTHARRSQ). The tract at residues 1 to 20 (MAVPKRKQSRANTHARRSQW) is disordered.

It belongs to the bacterial ribosomal protein bL32 family.

The sequence is that of Large ribosomal subunit protein bL32 from Leifsonia xyli subsp. xyli (strain CTCB07).